The following is an 813-amino-acid chain: Phosphate transporter PHO1 homolog 3 (813 aa).

The SPX domain occupies 1 to 359; the sequence is MKFGKEFSSQ…SRDATKPYMK (359 aa). The Cytoplasmic portion of the chain corresponds to 1–411; it reads MKFGKEFSSQ…KAKRERHRIT (411 aa). The disordered stretch occupies residues 214–266; sequence EHMEAIQEGGSSRAGLMEDDEEDEDEQNETSVVSTGAIDNETTTSRMRGARPS. Residues 230–241 are compositionally biased toward acidic residues; it reads MEDDEEDEDEQN. A helical membrane pass occupies residues 412 to 432; that stretch reads FSTGFSAGCVFSLIVALVAII. Residues 433–450 are Extracellular-facing; sequence RTRNLLEMEGQKEYMNTM. Residues 451 to 471 form a helical membrane-spanning segment; it reads FPLYSLFGFIVLHIIVYAANI. Residues 472–496 lie on the Cytoplasmic side of the membrane; it reads YYWRRYRVNYSFIFGFKQGTELGYR. Residues 497-517 traverse the membrane as a helical segment; the sequence is QVLLVGFSIGVLALLCVLANL. Over 518 to 533 the chain is Extracellular; it reads DMEADPKTKAYQARTE. The chain crosses the membrane as a helical span at residues 534-554; sequence ILPLILLAAMFIVLVLPFNYF. Residues 555–684 are Cytoplasmic-facing; sequence YRSSRFFFLT…SIQKGQVAWR (130 aa). Positions 618 to 813 constitute an EXS domain; it reads KESDVYNTFF…NYDEDDDKDN (196 aa). Residues 685-705 form a helical membrane-spanning segment; that stretch reads VLAAVFSFIAAIFCTYWDFVH. Residues 706-729 are Extracellular-facing; that stretch reads DWGLLNRTSKNRWLRDKLLVPQKK. The helical transmembrane segment at 730 to 750 threads the bilayer; sequence VYFIAMVLNVLLRFAWIQTVL. Topologically, residues 751-813 are cytoplasmic; the sequence is DFNFSFMHRQ…NYDEDDDKDN (63 aa).

This sequence belongs to the SYG1 (TC 2.A.94) family. Expressed in vascular cylinder of roots, leaves and filaments. Expressed in receptacle and stigma apex.

It localises to the cell membrane. May transport inorganic phosphate (Pi). This chain is Phosphate transporter PHO1 homolog 3 (PHO1;H3), found in Arabidopsis thaliana (Mouse-ear cress).